Consider the following 358-residue polypeptide: Peptide chain release factor 1 (358 aa).

Position 235 is an N5-methylglutamine (glutamine 235).

It belongs to the prokaryotic/mitochondrial release factor family. Post-translationally, methylated by PrmC. Methylation increases the termination efficiency of RF1.

It localises to the cytoplasm. Functionally, peptide chain release factor 1 directs the termination of translation in response to the peptide chain termination codons UAG and UAA. The polypeptide is Peptide chain release factor 1 (Neisseria gonorrhoeae (strain ATCC 700825 / FA 1090)).